The chain runs to 361 residues: tRNA-specific 2-thiouridylase MnmA (361 aa).

Residues 9 to 16 (GMSGGVDS) and methionine 35 contribute to the ATP site. An interaction with target base in tRNA region spans residues 95–97 (NPD). Catalysis depends on cysteine 100, which acts as the Nucleophile. An intrachain disulfide couples cysteine 100 to cysteine 196. Residue glycine 124 participates in ATP binding. The segment at 146-148 (KDQ) is interaction with tRNA. Cysteine 196 acts as the Cysteine persulfide intermediate in catalysis. An interaction with tRNA region spans residues 308-309 (RY).

It belongs to the MnmA/TRMU family.

The protein resides in the cytoplasm. It catalyses the reaction S-sulfanyl-L-cysteinyl-[protein] + uridine(34) in tRNA + AH2 + ATP = 2-thiouridine(34) in tRNA + L-cysteinyl-[protein] + A + AMP + diphosphate + H(+). Its function is as follows. Catalyzes the 2-thiolation of uridine at the wobble position (U34) of tRNA, leading to the formation of s(2)U34. The chain is tRNA-specific 2-thiouridylase MnmA from Nitrosomonas eutropha (strain DSM 101675 / C91 / Nm57).